The primary structure comprises 122 residues: Large ribosomal subunit protein uL14 (122 aa).

This sequence belongs to the universal ribosomal protein uL14 family. As to quaternary structure, part of the 50S ribosomal subunit. Forms a cluster with proteins L3 and L19. In the 70S ribosome, L14 and L19 interact and together make contacts with the 16S rRNA in bridges B5 and B8.

Binds to 23S rRNA. Forms part of two intersubunit bridges in the 70S ribosome. The protein is Large ribosomal subunit protein uL14 of Thermomicrobium roseum (strain ATCC 27502 / DSM 5159 / P-2).